The sequence spans 602 residues: VIN3-like protein 1 (602 aa).

Residues 1 to 38 are disordered; the sequence is MDSSSTKSKISHSRKTNKKSNKKHESNGKQQQQQDVDG. A compositionally biased stretch (basic residues) spans 9 to 22; that stretch reads KISHSRKTNKKSNK. The PHD-type zinc finger occupies 67 to 137; sequence RCSCCVCHNF…CFCCYSCGKV (71 aa). Positions 144 to 151 match the Nuclear localization signal motif; the sequence is WKKQLVAA. The Fibronectin type-III domain occupies 242-340; that stretch reads VPAACRFHFE…AMCFTKSVEI (99 aa). A disordered region spans residues 430–470; sequence LNEEFTPPDSSGGEDNGVPLNSLAEADGGDHDDNCDDAVSN. Positions 502 to 602 are VIN3-Interacting Domain (VID); the sequence is AISDSNDSEN…RPNNGVMTSH (101 aa).

In terms of assembly, interacts with VIN3 and VIL2. The heterodimer made of VIN3 and VIL1 is required for establishing the vernalization-induced epigenetic silencing of FLC. Component of the plant homeodomain / polycomb repressive complex 2 (PHD-PRC2) large complex during prolonged cold, composed of core PRC2 components (VRN2, EZA1, FIE and MSI1), and three related PHD finger proteins (VIL1, VIL2 and VIN3) that mediates histone H3 trimethylation on 'Lys-27' (H3K27me3). As to expression, accumulates in shoot and root apices, and in leaves.

It localises to the nucleus. The protein resides in the nucleus speckle. In terms of biological role, involved in both the vernalization and photoperiod pathways by regulating expression of the related floral repressors FLOWERING LOCUS C (FLC) and FLOWERING LOCUS M (FLM). Together with VIN3, required during vernalization for the modifications of FLC and FLM chromatin that are associated with an epigenetically silenced state (e.g. chromatin modifications, histone deacetylation, and trimethylated H3 'Lys-4' H3K4me3 and 'Lys-27' H3K27me3) and with acquisition of competence to flower. Promotes flowering in short days (SD=8 hours light/16 hours dark). Associates dynamically at FLC locus; during vernalization, binds to specific sites, but when in warm conditions, distributed along the whole locus. The protein is VIN3-like protein 1 (VIL1) of Arabidopsis thaliana (Mouse-ear cress).